The following is a 160-amino-acid chain: Putative 4-hydroxy-4-methyl-2-oxoglutarate aldolase (160 aa).

Residues 75-78 (GDQL) and R97 each bind substrate. D98 contacts a divalent metal cation.

The protein belongs to the class II aldolase/RraA-like family. Homotrimer. A divalent metal cation is required as a cofactor.

The catalysed reaction is 4-hydroxy-4-methyl-2-oxoglutarate = 2 pyruvate. The enzyme catalyses oxaloacetate + H(+) = pyruvate + CO2. Functionally, catalyzes the aldol cleavage of 4-hydroxy-4-methyl-2-oxoglutarate (HMG) into 2 molecules of pyruvate. Also contains a secondary oxaloacetate (OAA) decarboxylase activity due to the common pyruvate enolate transition state formed following C-C bond cleavage in the retro-aldol and decarboxylation reactions. The protein is Putative 4-hydroxy-4-methyl-2-oxoglutarate aldolase of Vibrio vulnificus (strain YJ016).